A 400-amino-acid polypeptide reads, in one-letter code: Acetate kinase (400 aa).

N10 contributes to the Mg(2+) binding site. K17 contributes to the ATP binding site. R91 lines the substrate pocket. D150 serves as the catalytic Proton donor/acceptor. ATP-binding positions include H210 to G214, D285 to R287, and G333 to N337. A Mg(2+)-binding site is contributed by E387.

It belongs to the acetokinase family. As to quaternary structure, homodimer. It depends on Mg(2+) as a cofactor. Mn(2+) is required as a cofactor.

It localises to the cytoplasm. It catalyses the reaction acetate + ATP = acetyl phosphate + ADP. It participates in metabolic intermediate biosynthesis; acetyl-CoA biosynthesis; acetyl-CoA from acetate: step 1/2. Its function is as follows. Catalyzes the formation of acetyl phosphate from acetate and ATP. Can also catalyze the reverse reaction. The sequence is that of Acetate kinase from Salmonella typhi.